The following is a 176-amino-acid chain: Centromere protein R (176 aa).

Residue K8 forms a Glycyl lysine isopeptide (Lys-Gly) (interchain with G-Cter in SUMO2) linkage. S17 is modified (phosphoserine). Positions 20 to 50 (PSKIVRKKSITAYSPTTGTYQLSPFSSPATP) are DD1. K22 participates in a covalent cross-link: Glycyl lysine isopeptide (Lys-Gly) (interchain with G-Cter in SUMO2). Position 28 is a phosphoserine (S28). A compositionally biased stretch (polar residues) spans 34 to 48 (PTTGTYQLSPFSSPA). The interval 34–78 (PTTGTYQLSPFSSPATPKEQEHRNGPSNETRKRSNLSSPVRQEST) is disordered. Over residues 51-65 (KEQEHRNGPSNETRK) the composition is skewed to basic and acidic residues. A Nuclear localization signal motif is present at residues 63 to 66 (TRKR). Phosphoserine is present on S71. Residues 82–112 (RDGFMVLLSKIEISSEKTMEIMKNLSSIQAL) adopt a coiled-coil conformation. The LXXIL motif signature appears at 171-175 (LKAIL).

Homodimer; mediated by the coiled coil domain. Interacts with CCNA2 and MTA1. Interacts with NFKB1 NF-kappa-B subunit. Component of the CENPA-CAD complex, composed of CENPI, CENPK, CENPL, CENPO, CENPP, CENPQ, CENPR and CENPS. The CENPA-CAD complex interacts with the CENPA-NAC complex, at least composed of CENPA, CENPC, CENPH, CENPM, CENPN, CENPT and CENPU. Interacts with TASOR. In terms of tissue distribution, expressed in the spermatogonia and spermatocytes.

The protein resides in the nucleus. Its subcellular location is the chromosome. It localises to the centromere. The protein localises to the kinetochore. In terms of biological role, transcription coregulator that can have both coactivator and corepressor functions. Involved in the coactivation of nuclear receptors for retinoid X (RXRs) and thyroid hormone (TRs) in a ligand-dependent fashion. In contrast, it does not coactivate nuclear receptors for retinoic acid, vitamin D, progesterone receptor, nor glucocorticoid. Acts as a coactivator for estrogen receptor alpha. Acts as a transcriptional corepressor via its interaction with the NFKB1 NF-kappa-B subunit, possibly by interfering with the transactivation domain of NFKB1. Induces apoptosis in breast cancer cells, but not in other cancer cells, via a caspase-2 mediated pathway that involves mitochondrial membrane permeabilization but does not require other caspases. May also act as an inhibitor of cyclin A-associated kinase. Also acts a component of the CENPA-CAD (nucleosome distal) complex, a complex recruited to centromeres which is involved in assembly of kinetochore proteins, mitotic progression and chromosome segregation. May be involved in incorporation of newly synthesized CENPA into centromeres via its interaction with the CENPA-NAC complex. The chain is Centromere protein R (Itgb3bp) from Mus musculus (Mouse).